We begin with the raw amino-acid sequence, 212 residues long: Floral homeotic protein PMADS 2 (212 aa).

In terms of domain architecture, MADS-box spans 3–58 (RGKIEIKRIENSSNRQVTYSKRRNGIIKKAKEITVLCDAKVSLIIFGNSGKMHEYC). In terms of domain architecture, K-box spans 84 to 170 (HENLSNEIDR…QYALHQKEMA (87 aa)).

Predominantly expressed in petals and stamens, less in carpels and sepals.

Its subcellular location is the nucleus. In terms of biological role, transcription factor involved in the genetic control of flower development. The protein is Floral homeotic protein PMADS 2 (PMADS2) of Petunia hybrida (Petunia).